A 137-amino-acid polypeptide reads, in one-letter code: uncharacterized protein (137 aa).

The tract at residues 116–137 (ARPPRGSGGTRTARNGARTASE) is disordered. A compositionally biased stretch (polar residues) spans 125–137 (TRTARNGARTASE).

This is an uncharacterized protein from Mycobacterium bovis (strain ATCC BAA-935 / AF2122/97).